Consider the following 444-residue polypeptide: Glutamate--tRNA ligase 2 (444 aa).

Residues 8 to 18 carry the 'HIGH' region motif; it reads PSPTGHLHAGN. The short motif at 241–245 is the 'KMSKS' region element; it reads KLSKR. Lys-244 provides a ligand contact to ATP.

Belongs to the class-I aminoacyl-tRNA synthetase family. Glutamate--tRNA ligase type 1 subfamily. In terms of assembly, monomer.

The protein resides in the cytoplasm. It carries out the reaction tRNA(Glu) + L-glutamate + ATP = L-glutamyl-tRNA(Glu) + AMP + diphosphate. Functionally, catalyzes the attachment of glutamate to tRNA(Glu) in a two-step reaction: glutamate is first activated by ATP to form Glu-AMP and then transferred to the acceptor end of tRNA(Glu). The chain is Glutamate--tRNA ligase 2 from Acidiphilium cryptum (strain JF-5).